We begin with the raw amino-acid sequence, 234 residues long: Enolase-phosphatase E1 (234 aa).

Residues Asp10 and Glu12 each contribute to the Mg(2+) site. Residues 125–126 (SS) and Lys162 each bind substrate. Asp188 serves as a coordination point for Mg(2+).

This sequence belongs to the HAD-like hydrolase superfamily. MasA/MtnC family. Monomer. Requires Mg(2+) as cofactor.

The protein localises to the cytoplasm. Its subcellular location is the nucleus. It catalyses the reaction 5-methylsulfanyl-2,3-dioxopentyl phosphate + H2O = 1,2-dihydroxy-5-(methylsulfanyl)pent-1-en-3-one + phosphate. Its pathway is amino-acid biosynthesis; L-methionine biosynthesis via salvage pathway; L-methionine from S-methyl-5-thio-alpha-D-ribose 1-phosphate: step 3/6. It functions in the pathway amino-acid biosynthesis; L-methionine biosynthesis via salvage pathway; L-methionine from S-methyl-5-thio-alpha-D-ribose 1-phosphate: step 4/6. In terms of biological role, bifunctional enzyme that catalyzes the enolization of 2,3-diketo-5-methylthiopentyl-1-phosphate (DK-MTP-1-P) into the intermediate 2-hydroxy-3-keto-5-methylthiopentenyl-1-phosphate (HK-MTPenyl-1-P), which is then dephosphorylated to form the acireductone 1,2-dihydroxy-3-keto-5-methylthiopentene (DHK-MTPene). This is Enolase-phosphatase E1 (utr4) from Neurospora crassa (strain ATCC 24698 / 74-OR23-1A / CBS 708.71 / DSM 1257 / FGSC 987).